The primary structure comprises 329 residues: BTB/POZ domain-containing adapter for CUL3-mediated RhoA degradation protein 1 (329 aa).

Low complexity predominate over residues 1–15 (MSAEASGPAAAEAPS). The tract at residues 1-21 (MSAEASGPAAAEAPSLEVAKP) is disordered. In terms of domain architecture, BTB spans 41 to 109 (KYVKLNVGGS…LRDGSVPLPE (69 aa)). Residues 280-302 (LEATGGAAGGGGASRGEDEDNRE) are disordered.

It belongs to the BACURD family. As to quaternary structure, homotetramer; forms a two-fold symmetric tetramer in solution. Interacts with CUL3; interaction is direct and forms a 5:5 heterodecamer. Component of the BCR(KCTD13) E3 ubiquitin ligase complex, at least composed of CUL3, KCTD13/BACURD1 and RBX1. Interacts with RHOA; with a preference for RhoA-GDP. Interacts with POLD2 and PCNA. Interacts with SPRTN.

It localises to the nucleus. The protein operates within protein modification; protein ubiquitination. Functionally, substrate-specific adapter of a BCR (BTB-CUL3-RBX1) E3 ubiquitin-protein ligase complex required for synaptic transmission. The BCR(KCTD13) E3 ubiquitin ligase complex mediates the ubiquitination of RHOA, leading to its degradation by the proteasome, thereby regulating the actin cytoskeleton and promoting synaptic transmission. This chain is BTB/POZ domain-containing adapter for CUL3-mediated RhoA degradation protein 1 (KCTD13), found in Bos taurus (Bovine).